Consider the following 203-residue polypeptide: A-type ATP synthase subunit E (203 aa).

The protein belongs to the V-ATPase E subunit family. As to quaternary structure, has multiple subunits with at least A(3), B(3), C, D, E, F, H, I and proteolipid K(x).

It is found in the cell membrane. Functionally, component of the A-type ATP synthase that produces ATP from ADP in the presence of a proton gradient across the membrane. The polypeptide is A-type ATP synthase subunit E (Thermococcus sibiricus (strain DSM 12597 / MM 739)).